The sequence spans 251 residues: 3-deoxy-manno-octulosonate cytidylyltransferase (251 aa).

This sequence belongs to the KdsB family.

It localises to the cytoplasm. The enzyme catalyses 3-deoxy-alpha-D-manno-oct-2-ulosonate + CTP = CMP-3-deoxy-beta-D-manno-octulosonate + diphosphate. The protein operates within nucleotide-sugar biosynthesis; CMP-3-deoxy-D-manno-octulosonate biosynthesis; CMP-3-deoxy-D-manno-octulosonate from 3-deoxy-D-manno-octulosonate and CTP: step 1/1. It participates in bacterial outer membrane biogenesis; lipopolysaccharide biosynthesis. In terms of biological role, activates KDO (a required 8-carbon sugar) for incorporation into bacterial lipopolysaccharide in Gram-negative bacteria. The sequence is that of 3-deoxy-manno-octulosonate cytidylyltransferase from Vibrio vulnificus (strain CMCP6).